The following is a 207-amino-acid chain: Protein lin-7 homolog B (207 aa).

Positions 1 to 13 (MAALVEPLGLERD) match the Kinase interacting site motif. An L27 domain is found at 10–65 (LERDVSRAVELLERLQRSGELPPQKLQALQRVLQSRFCSAIREVYEQLYDTLDITG). Residues 93–175 (VVELPKTDEG…SVKLVVRYTP (83 aa)) form the PDZ domain. The segment at 187–207 (KMRSARRRQQHHSYSSLESRG) is disordered. A compositionally biased stretch (polar residues) spans 198 to 207 (HSYSSLESRG).

The protein belongs to the lin-7 family. In terms of assembly, forms two exclusive ternary complexes with CASK and CASKIN1. The brain-specific heterotrimeric complex (LIN-10-LIN-2-LIN-7 complex) composed of at least APBA1, CASK, and LIN7, associates with the motor protein KIF17 to transport vesicles along microtubules. Forms a heterotrimeric complex composed of MMP5, LIN7B and PATJ; the N-terminal L27 domain of PALS1 interacts with the L27 domain of PATJ and the C-terminal L27 domain of PALS1 interacts with the L27 domain of LIN7B. Forms a heterotrimeric complex with DLG1 and CASK via their L27 domains. Interacts with DLG4 and GRIN2B as well as CDH1 and CTNNB1, the channels KCNJ12/Kir2.2, KCNJ4/Kir2.3 and probably KCNJ2/Kir2.1 and SLC6A12/BGT-1 via its PDZ domain. The association of LIN7A with cadherin and beta-catenin is calcium-dependent, occurs at synaptic junctions and requires the actin cytoskeleton. Interacts with EGFR, ERBB2, ERBB3 and ERBB4 with both PDZ and KID domains. Associates with KIF17 via APBA1. Interacts with ASIC3. Interacts with TOPK. Interacts with RTKN. Interacts with APBA1. Interacts with MPP7. Interacts with DLG2. Interacts with DLG3. Expressed only in brain.

The protein localises to the cell membrane. It is found in the basolateral cell membrane. Its subcellular location is the cell junction. The protein resides in the postsynaptic density membrane. It localises to the tight junction. In terms of biological role, plays a role in establishing and maintaining the asymmetric distribution of channels and receptors at the plasma membrane of polarized cells. Forms membrane-associated multiprotein complexes that may regulate delivery and recycling of proteins to the correct membrane domains. The tripartite complex composed of LIN7 (LIN7A, LIN7B or LIN7C), CASK and APBA1 associates with the motor protein KIF17 to transport vesicles containing N-methyl-D-aspartate (NMDA) receptor subunit NR2B along microtubules. This complex may have the potential to couple synaptic vesicle exocytosis to cell adhesion in brain. Ensures the proper localization of GRIN2B (subunit 2B of the NMDA receptor) to neuronal postsynaptic density and may function in localizing synaptic vesicles at synapses where it is recruited by beta-catenin and cadherin. Required to localize Kir2 channels, GABA transporter (SLC6A12) and EGFR/ERBB1, ERBB2, ERBB3 and ERBB4 to the basolateral membrane of epithelial cells. May increase the amplitude of ASIC3 acid-evoked currents by stabilizing the channel at the cell surface. In Rattus norvegicus (Rat), this protein is Protein lin-7 homolog B (Lin7b).